We begin with the raw amino-acid sequence, 703 residues long: Capsid protein VP1 (703 aa).

Belongs to the caliciviridae capsid protein family. Homodimer. Homomultimer. Interacts with the minor capsid protein VP2. May bind to VP3 and Vpg proteins. In terms of processing, cleaved by the viral protease to produce mature capsid protein.

Its subcellular location is the virion. The protein resides in the host cytoplasm. Functionally, capsid protein self assembles to form an icosahedral capsid with a T=3 symmetry, about 38 nm in diameter, and consisting of 180 capsid proteins. A smaller form of capsid with a diameter of 23 nm might be capsid proteins assembled as icosahedron with T=1 symmetry. The capsid encapsulates the genomic RNA and is decorated with VP2 proteins. The chain is Capsid protein VP1 from San Miguel sea lion virus serotype 4 (SMSV-4).